The following is a 217-amino-acid chain: Pro-Pro endopeptidase (217 aa).

The signal sequence occupies residues 1-27 (MKWDKRVVALILAVMIVCPLFAAPAHA). The region spanning 30–216 (QSILDKLVVL…TYEFMAKLFA (187 aa)) is the ATLF-like domain. The segment at 112–115 (SERV) is plays a crucial role in substrate specificity. A Zn(2+)-binding site is contributed by histidine 137. The active-site Proton acceptor is glutamate 138. Zn(2+) is bound by residues histidine 141, tyrosine 174, and glutamate 181.

This sequence belongs to the peptidase M34 family. Pro-Pro endopeptidase subfamily. In terms of assembly, monomer. The cofactor is Zn(2+).

It is found in the secreted. The catalysed reaction is The enzyme catalyzes the hydrolytic cleavage of peptide bonds between two proline residues.. Its function is as follows. Zinc-dependent endoprotease with a unique preference for proline residues surrounding the scissile bond, which cleaves in a PLP-|-PVP motif. Cleaves the cell surface protein encoded by an adjacent gene, which contains two PPEP-2 cleaving sites and putative extracellular matrix-binding domains. Thereby, may have a role in the regulation of P.alvei adhesion. Is not able to cleave within the PVP-|-PVQ motif, and only shows a very poor cleavage of the VNP-|-PVP motif in vitro, which is the optimal substrate peptide for PPEP-1 from P.difficile. The sequence is that of Pro-Pro endopeptidase from Paenibacillus alvei (strain ATCC 6344 / DSM 29 / NBRC 3343 / NCIMB 9371 / NCTC 6352) (Bacillus alvei).